The chain runs to 191 residues: Holliday junction branch migration complex subunit RuvA (191 aa).

A domain I region spans residues 1–64; the sequence is MIGSITGNVE…DNITQLYGFL (64 aa). The segment at 65–142 is domain II; that stretch reads NRQEQDYFKM…KMPIEETFSI (78 aa). Residues 143–146 form a flexible linker region; the sequence is IEND. Positions 146–191 are domain III; it reads DDSLAALISLGYEKLKAFNVIQEIKSKTPDASTQEVIRKALQKLSQ.

This sequence belongs to the RuvA family. Homotetramer. Forms an RuvA(8)-RuvB(12)-Holliday junction (HJ) complex. HJ DNA is sandwiched between 2 RuvA tetramers; dsDNA enters through RuvA and exits via RuvB. An RuvB hexamer assembles on each DNA strand where it exits the tetramer. Each RuvB hexamer is contacted by two RuvA subunits (via domain III) on 2 adjacent RuvB subunits; this complex drives branch migration. In the full resolvosome a probable DNA-RuvA(4)-RuvB(12)-RuvC(2) complex forms which resolves the HJ.

Its subcellular location is the cytoplasm. In terms of biological role, the RuvA-RuvB-RuvC complex processes Holliday junction (HJ) DNA during genetic recombination and DNA repair, while the RuvA-RuvB complex plays an important role in the rescue of blocked DNA replication forks via replication fork reversal (RFR). RuvA specifically binds to HJ cruciform DNA, conferring on it an open structure. The RuvB hexamer acts as an ATP-dependent pump, pulling dsDNA into and through the RuvAB complex. HJ branch migration allows RuvC to scan DNA until it finds its consensus sequence, where it cleaves and resolves the cruciform DNA. This Ehrlichia ruminantium (strain Gardel) protein is Holliday junction branch migration complex subunit RuvA.